The primary structure comprises 417 residues: Serine hydroxymethyltransferase 2 (417 aa).

(6S)-5,6,7,8-tetrahydrofolate contacts are provided by residues leucine 121 and 125-127; that span reads GHL. At lysine 230 the chain carries N6-(pyridoxal phosphate)lysine. (6S)-5,6,7,8-tetrahydrofolate is bound at residue 355 to 357; that stretch reads SPF.

Belongs to the SHMT family. As to quaternary structure, homodimer. The cofactor is pyridoxal 5'-phosphate.

The protein localises to the cytoplasm. The catalysed reaction is (6R)-5,10-methylene-5,6,7,8-tetrahydrofolate + glycine + H2O = (6S)-5,6,7,8-tetrahydrofolate + L-serine. Its pathway is one-carbon metabolism; tetrahydrofolate interconversion. The protein operates within amino-acid biosynthesis; glycine biosynthesis; glycine from L-serine: step 1/1. Functionally, catalyzes the reversible interconversion of serine and glycine with tetrahydrofolate (THF) serving as the one-carbon carrier. This reaction serves as the major source of one-carbon groups required for the biosynthesis of purines, thymidylate, methionine, and other important biomolecules. Also exhibits THF-independent aldolase activity toward beta-hydroxyamino acids, producing glycine and aldehydes, via a retro-aldol mechanism. The sequence is that of Serine hydroxymethyltransferase 2 from Pseudomonas fluorescens (strain ATCC BAA-477 / NRRL B-23932 / Pf-5).